We begin with the raw amino-acid sequence, 273 residues long: Release factor glutamine methyltransferase (273 aa).

S-adenosyl-L-methionine contacts are provided by residues G109–G113, D132, W159, and N176. N176–Y179 is a substrate binding site.

It belongs to the protein N5-glutamine methyltransferase family. PrmC subfamily.

It carries out the reaction L-glutaminyl-[peptide chain release factor] + S-adenosyl-L-methionine = N(5)-methyl-L-glutaminyl-[peptide chain release factor] + S-adenosyl-L-homocysteine + H(+). Functionally, methylates the class 1 translation termination release factors RF1/PrfA and RF2/PrfB on the glutamine residue of the universally conserved GGQ motif. The chain is Release factor glutamine methyltransferase from Neisseria gonorrhoeae (strain ATCC 700825 / FA 1090).